The sequence spans 506 residues: Maturase K (506 aa).

Belongs to the intron maturase 2 family. MatK subfamily.

The protein resides in the plastid. Its subcellular location is the chloroplast. Functionally, usually encoded in the trnK tRNA gene intron. Probably assists in splicing its own and other chloroplast group II introns. This chain is Maturase K, found in Trifolium repens (Creeping white clover).